A 443-amino-acid chain; its full sequence is Tubulin beta-3 chain (443 aa).

Gln11, Glu69, Ser138, Gly142, Thr143, Gly144, Asn204, and Asn226 together coordinate GTP. Glu69 contacts Mg(2+).

It belongs to the tubulin family. In terms of assembly, dimer of alpha and beta chains. A typical microtubule is a hollow water-filled tube with an outer diameter of 25 nm and an inner diameter of 15 nM. Alpha-beta heterodimers associate head-to-tail to form protofilaments running lengthwise along the microtubule wall with the beta-tubulin subunit facing the microtubule plus end conferring a structural polarity. Microtubules usually have 13 protofilaments but different protofilament numbers can be found in some organisms and specialized cells. It depends on Mg(2+) as a cofactor.

It localises to the cytoplasm. Its subcellular location is the cytoskeleton. Tubulin is the major constituent of microtubules, a cylinder consisting of laterally associated linear protofilaments composed of alpha- and beta-tubulin heterodimers. Microtubules grow by the addition of GTP-tubulin dimers to the microtubule end, where a stabilizing cap forms. Below the cap, tubulin dimers are in GDP-bound state, owing to GTPase activity of alpha-tubulin. The protein is Tubulin beta-3 chain (TUB-3) of Echinococcus multilocularis (Fox tapeworm).